We begin with the raw amino-acid sequence, 161 residues long: Regulator of ribonuclease activity A (161 aa).

This sequence belongs to the RraA family. As to quaternary structure, homotrimer. Binds to both RNA-binding sites in the C-terminal region of Rne and to RhlB.

Its subcellular location is the cytoplasm. In terms of biological role, globally modulates RNA abundance by binding to RNase E (Rne) and regulating its endonucleolytic activity. Can modulate Rne action in a substrate-dependent manner by altering the composition of the degradosome. Modulates RNA-binding and helicase activities of the degradosome. This Sodalis glossinidius (strain morsitans) protein is Regulator of ribonuclease activity A.